Reading from the N-terminus, the 1887-residue chain is DNA-directed RNA polymerase II subunit RPB1 (1887 aa).

Zn(2+) contacts are provided by C67, C70, C77, H80, C107, C110, C150, and C176. A disordered region spans residues 156–178; that stretch reads MDLTKENQQPDPNKKPGHGGCGH. D487, D489, and D491 together coordinate Mg(2+). A bridging helix region spans residues 825-837; it reads PSEFYFHAMGGRE. Residue K1260 forms a Glycyl lysine isopeptide (Lys-Gly) (interchain with G-Cter in ubiquitin) linkage. 2 disordered regions span residues 1528–1565 and 1579–1887; these read TPGGPSFSPSAASDASGMSPSWSPAHPGSSPSSPGPSM and YSPT…ESED. Low complexity-rich tracts occupy residues 1529-1565, 1579-1610, and 1626-1650; these read PGGPSFSPSAASDASGMSPSWSPAHPGSSPSSPGPSM, YSPTSPNYTASSPGGASPNYSPSSPNYSPTSP, and PQSTGYSPSSSGYSPTSPVYSPTVQ. Copy 1 of the repeat occupies 1579-1585; it reads YSPTSPN. The segment at 1579-1881 is C-terminal domain (CTD); 32 X 7 AA approximate tandem repeats of Y-[ST]-P-[STNVAPGN]-[STGMA]-[PSTR]-[SNAGCQKTLRIMH]; the sequence is YSPTSPNYTA…SPAYSPSSPT (303 aa). The 2; approximate repeat unit spans residues 1586 to 1592; sequence YTASSPG. Repeat copies occupy residues 1598–1604, 1605–1611, 1631–1637, and 1638–1644. A compositionally biased stretch (polar residues) spans 1651–1664; the sequence is FQSSPSFAGSGSNI. A compositionally biased stretch (low complexity) spans 1665 to 1760; the sequence is YSPGNAYSPS…GVKYSPTSPT (96 aa). 17 consecutive repeat copies span residues 1671-1677, 1678-1684, 1685-1691, 1692-1698, 1699-1705, 1706-1712, 1713-1719, 1720-1726, 1727-1733, 1740-1746, 1754-1760, 1761-1767, 1777-1783, 1784-1790, 1791-1797, 1798-1804, and 1811-1817. Residues 1776 to 1786 are compositionally biased toward polar residues; it reads QYTPGSPQYSP. Low complexity predominate over residues 1788–1813; sequence SPKYSPTSPLYSPSSPQHSPSNQYSP. The segment covering 1814 to 1831 has biased composition (polar residues); that stretch reads TGSTYSATSPRYSPNMSI. A 24; approximate repeat occupies 1818–1824; sequence YSATSPR. 8 consecutive repeat copies span residues 1825–1831, 1832–1838, 1839–1845, 1846–1852, 1853–1859, 1860–1866, 1868–1874, and 1875–1881. Over residues 1832–1849 the composition is skewed to low complexity; that stretch reads YSPSSTKYSPTSPTYTPT. Over residues 1850–1859 the composition is skewed to polar residues; sequence ARNYSPTSPM. Positions 1860 to 1881 are enriched in low complexity; the sequence is YSPTAPSHYSPTSPAYSPSSPT.

The protein belongs to the RNA polymerase beta' chain family. As to quaternary structure, component of the RNA polymerase II (Pol II) complex consisting of 12 subunits. Post-translationally, the tandem 7 residues repeats in the C-terminal domain (CTD) can be highly phosphorylated. The phosphorylation activates Pol II. Phosphorylation occurs mainly at residues 'Ser-2' and 'Ser-5' of the heptapeptide repeat. The phosphorylation state is believed to result from the balanced action of site-specific CTD kinases and phosphatase, and a 'CTD code' that specifies the position of Pol II within the transcription cycle has been proposed. In terms of processing, following transcription stress, the elongating form of RNA polymerase II (RNA pol IIo) is polyubiquitinated via 'Lys-63'-linkages on Lys-1260 at DNA damage sites without leading to degradation: ubiquitination promotes RNA pol IIo backtracking to allow access by the transcription-coupled nucleotide excision repair (TC-NER) machinery. Subsequent DEF1-dependent polyubiquitination by the elongin complex via 'Lys-48'-linkages may lead to proteasome-mediated degradation; presumably at stalled RNA pol II where TC-NER has failed, to halt global transcription and enable 'last resort' DNA repair pathways.

The protein localises to the nucleus. It carries out the reaction RNA(n) + a ribonucleoside 5'-triphosphate = RNA(n+1) + diphosphate. Its function is as follows. DNA-dependent RNA polymerase catalyzes the transcription of DNA into RNA using the four ribonucleoside triphosphates as substrates. Largest and catalytic component of RNA polymerase II which synthesizes mRNA precursors and many functional non-coding RNAs. Forms the polymerase active center together with the second largest subunit. Pol II is the central component of the basal RNA polymerase II transcription machinery. It is composed of mobile elements that move relative to each other. RPB1 is part of the core element with the central large cleft, the clamp element that moves to open and close the cleft and the jaws that are thought to grab the incoming DNA template. At the start of transcription, a single-stranded DNA template strand of the promoter is positioned within the central active site cleft of Pol II. A bridging helix emanates from RPB1 and crosses the cleft near the catalytic site and is thought to promote translocation of Pol II by acting as a ratchet that moves the RNA-DNA hybrid through the active site by switching from straight to bent conformations at each step of nucleotide addition. During transcription elongation, Pol II moves on the template as the transcript elongates. Elongation is influenced by the phosphorylation status of the C-terminal domain (CTD) of Pol II largest subunit (RPB1), which serves as a platform for assembly of factors that regulate transcription initiation, elongation, termination and mRNA processing. The protein is DNA-directed RNA polymerase II subunit RPB1 of Drosophila melanogaster (Fruit fly).